Consider the following 511-residue polypeptide: GMP synthase [glutamine-hydrolyzing] (511 aa).

The region spanning 5–195 is the Glutamine amidotransferase type-1 domain; sequence DILVLDFGSQ…AKYACNCESV (191 aa). Cys82 acts as the Nucleophile in catalysis. Residues His169 and Glu171 contribute to the active site. One can recognise a GMPS ATP-PPase domain in the interval 196 to 386; the sequence is WNMGSFAKTQ…LGLSKEVVYR (191 aa). 223 to 229 contacts ATP; it reads SGGVDSS.

Homodimer.

It carries out the reaction XMP + L-glutamine + ATP + H2O = GMP + L-glutamate + AMP + diphosphate + 2 H(+). It participates in purine metabolism; GMP biosynthesis; GMP from XMP (L-Gln route): step 1/1. Catalyzes the synthesis of GMP from XMP. In Campylobacter jejuni subsp. doylei (strain ATCC BAA-1458 / RM4099 / 269.97), this protein is GMP synthase [glutamine-hydrolyzing].